Consider the following 554-residue polypeptide: Malate synthase 1 (554 aa).

Arg177 acts as the Proton acceptor in catalysis. Asp457 functions as the Proton donor in the catalytic mechanism. The SKL peroxisome targeting motif signature appears at 552–554; the sequence is SKL.

The protein belongs to the malate synthase family. Interacts with PEX9.

It is found in the peroxisome matrix. It catalyses the reaction glyoxylate + acetyl-CoA + H2O = (S)-malate + CoA + H(+). The protein operates within carbohydrate metabolism; glyoxylate cycle; (S)-malate from isocitrate: step 2/2. In terms of biological role, malate synthase which takes part in the glyoxylate cycle. MLS1 activity is essential for cells to grow on oleic acid as a sole carbon source. Two steps of the glyoxylate cycle take place in the cytosol, the splitting of isocitrate into succinate and glyoxylate, and the dehydrogenation of malate to oxaloacetate. However, the formation of malate from glyoxylate and acetyl-CoA undertaken MLS1, occurs in the peroxisomes when cells are grown on oleic acid. The source of acetyl-CoA being either peroxisomal when breaking down fatty acids, or cytosolic when extra-cellular two-carbon substrates are used, therefore, although not strictly essential, the peroxisomal localization of MLS1 appears to be advantageous for cells growing on oleic acid, in that acetyl-CoA production and utilization are thereby intimately compartmentalized together to increase efficiency. This is Malate synthase 1 from Saccharomyces cerevisiae (strain ATCC 204508 / S288c) (Baker's yeast).